The chain runs to 95 residues: Integration host factor subunit beta (95 aa).

It belongs to the bacterial histone-like protein family. As to quaternary structure, heterodimer of an alpha and a beta chain.

Functionally, this protein is one of the two subunits of integration host factor, a specific DNA-binding protein that functions in genetic recombination as well as in transcriptional and translational control. In Shewanella sp. (strain ANA-3), this protein is Integration host factor subunit beta.